The sequence spans 363 residues: UDP-N-acetylglucosamine--N-acetylmuramyl-(pentapeptide) pyrophosphoryl-undecaprenol N-acetylglucosamine transferase (363 aa).

Residues 10–12 (TGG), asparagine 124, serine 195, isoleucine 250, and glutamine 295 each bind UDP-N-acetyl-alpha-D-glucosamine.

This sequence belongs to the glycosyltransferase 28 family. MurG subfamily.

It is found in the cell membrane. The catalysed reaction is di-trans,octa-cis-undecaprenyl diphospho-N-acetyl-alpha-D-muramoyl-L-alanyl-D-glutamyl-meso-2,6-diaminopimeloyl-D-alanyl-D-alanine + UDP-N-acetyl-alpha-D-glucosamine = di-trans,octa-cis-undecaprenyl diphospho-[N-acetyl-alpha-D-glucosaminyl-(1-&gt;4)]-N-acetyl-alpha-D-muramoyl-L-alanyl-D-glutamyl-meso-2,6-diaminopimeloyl-D-alanyl-D-alanine + UDP + H(+). It participates in cell wall biogenesis; peptidoglycan biosynthesis. Functionally, cell wall formation. Catalyzes the transfer of a GlcNAc subunit on undecaprenyl-pyrophosphoryl-MurNAc-pentapeptide (lipid intermediate I) to form undecaprenyl-pyrophosphoryl-MurNAc-(pentapeptide)GlcNAc (lipid intermediate II). The protein is UDP-N-acetylglucosamine--N-acetylmuramyl-(pentapeptide) pyrophosphoryl-undecaprenol N-acetylglucosamine transferase of Halalkalibacterium halodurans (strain ATCC BAA-125 / DSM 18197 / FERM 7344 / JCM 9153 / C-125) (Bacillus halodurans).